Consider the following 349-residue polypeptide: tRNA pseudouridine synthase D (349 aa).

Residue phenylalanine 27 participates in substrate binding. The active-site Nucleophile is the aspartate 80. Asparagine 129 serves as a coordination point for substrate. One can recognise a TRUD domain in the interval glycine 155 to leucine 303. Phenylalanine 329 is a binding site for substrate.

The protein belongs to the pseudouridine synthase TruD family.

It catalyses the reaction uridine(13) in tRNA = pseudouridine(13) in tRNA. Functionally, responsible for synthesis of pseudouridine from uracil-13 in transfer RNAs. This is tRNA pseudouridine synthase D from Escherichia coli O8 (strain IAI1).